The sequence spans 184 residues: Large ribosomal subunit protein uL6 (184 aa).

Belongs to the universal ribosomal protein uL6 family. In terms of assembly, part of the 50S ribosomal subunit.

Its function is as follows. This protein binds to the 23S rRNA, and is important in its secondary structure. It is located near the subunit interface in the base of the L7/L12 stalk, and near the tRNA binding site of the peptidyltransferase center. In Thermococcus kodakarensis (strain ATCC BAA-918 / JCM 12380 / KOD1) (Pyrococcus kodakaraensis (strain KOD1)), this protein is Large ribosomal subunit protein uL6.